A 56-amino-acid chain; its full sequence is Pituitary adenylate cyclase-activating polypeptide (56 aa).

The segment at 42–50 is important for receptor binding; sequence VKKYLAAVL. Position 50 is a leucine amide (L50).

The protein belongs to the glucagon family. As to quaternary structure, interacts with ADCYAP1R1 (via N-terminal extracellular domain).

It localises to the secreted. PACAP is a neuropeptide involved in diverse array of physiological processes through activating the PACAP subfamily of class B1 G protein-coupled receptors: VIP receptor 1 (VIPR1), VIP receptor 2 (VIPR2), and PACAP type I receptor (ADCYAP1R1). Exerts neuroprotective and general cytoprotective effects due to anti-apoptotic, anti-inflammatory, and antioxidant actions. In Heloderma suspectum (Gila monster), this protein is Pituitary adenylate cyclase-activating polypeptide (Adcyap1).